Reading from the N-terminus, the 867-residue chain is KH domain-containing protein akap-1 (867 aa).

The chain crosses the membrane as a helical span at residues His108 to Asn128. Disordered regions lie at residues Ser145–Val458 and His481–Thr523. Residues Ala152–Gly162 are compositionally biased toward polar residues. Composition is skewed to basic and acidic residues over residues Gln186 to Gln211, Thr218 to Ala239, Ser247 to Val275, and Gln298 to Leu307. A compositionally biased stretch (polar residues) spans Thr336–Leu345. Residues Glu363–Arg383 show a composition bias toward basic and acidic residues. Residues Asn397–Gly408 show a composition bias toward basic residues. Composition is skewed to basic and acidic residues over residues Leu441–Val458 and His481–Asp490. Over residues Leu494–Gly507 the composition is skewed to polar residues. In terms of domain architecture, KH spans Leu528–Leu595. Positions Pro689–Leu747 constitute a Tudor domain.

It localises to the membrane. This is KH domain-containing protein akap-1 from Caenorhabditis elegans.